Reading from the N-terminus, the 154-residue chain is Large ribosomal subunit protein uL30 (154 aa).

It belongs to the universal ribosomal protein uL30 family. As to quaternary structure, part of the 50S ribosomal subunit.

This is Large ribosomal subunit protein uL30 from Methanocaldococcus jannaschii (strain ATCC 43067 / DSM 2661 / JAL-1 / JCM 10045 / NBRC 100440) (Methanococcus jannaschii).